A 414-amino-acid chain; its full sequence is MVGDIATRWKELSGSSKWKDLLDPLDLDLRRYILHYGDMAEVGYLAFNSDRRSKYVGDSCYTKEELFARTGYLKANPFRYEVTKYIYGTSSIRLPECFIIKSLSREAWNKESNWLGYIAVATDEGKKLLGRRGIVVAWRGTIQLYEWANDFDFPLESAVMVFPGANPNDEPRVANGWLSLYTSTDPRSRFDKTSAQEQVQEELKRLLELYKNEDVTITLTGHSLGAVMSILSAADFLHNEWPKITPSLQHSLCVTVFAFGSPQIGDRSFKRLVESLEHLHILRVTNVPDLIPRYPVFRFTDIGEELQINTLKSEYLKRSLNLGHFHNLEAYLHGVAGTQHNQGEFKLEINRDIALVNKGLDALEDKYLVPGHWWVLENKGMVQSDDGTWKLNGDRSKKKQEEEDEKEENNCKFP.

Lys-19 is covalently cross-linked (Glycyl lysine isopeptide (Lys-Gly) (interchain with G-Cter in ubiquitin)). Residues 191-217 adopt a coiled-coil conformation; it reads DKTSAQEQVQEELKRLLELYKNEDVTI. The active-site Acyl-ester intermediate is Ser-223. Catalysis depends on charge relay system residues Ser-223, Asp-289, and His-326. Residues 386-414 are disordered; the sequence is DGTWKLNGDRSKKKQEEEDEKEENNCKFP. A coiled-coil region spans residues 390 to 410; it reads KLNGDRSKKKQEEEDEKEENN. The segment covering 392 to 401 has biased composition (basic and acidic residues); the sequence is NGDRSKKKQE.

The protein belongs to the AB hydrolase superfamily. Lipase family.

Its subcellular location is the cytoplasm. In terms of biological role, acylhydrolase that catalyzes the hydrolysis of phospholipids at the sn-1 position. In Arabidopsis thaliana (Mouse-ear cress), this protein is Phospholipase A1-IIbeta.